The following is a 26-amino-acid chain: Guentherin (26 aa).

In terms of tissue distribution, expressed by the skin glands.

The protein localises to the secreted. Its function is as follows. Antimicrobial peptide. Active against the Gram-positive bacteria S.aureus FDA209P (MIC=35.5 ug/ml) and B.subtilis ATCC 6633 (MIC&gt;64 ug/ml), but not active against the Gram-negative bacterium E.coli or the fungus C.albicans. The polypeptide is Guentherin (Sylvirana guentheri (Gunther's frog)).